Reading from the N-terminus, the 474-residue chain is MATSWGSILQDEKQLEELAQQAIDRALAEGVLLRSAKNPSSSDVVTYAPFTLFPSPVPSTLLEQAYAVQMDFNILVDAVSQNSAFLEQTLSSTIKKDEYTARLFDIYKQVLKEGIAQTVFLGLNRSDYMFQCSADGSKALKQIEINTISASFGGLASRTPAVHRHVLNVLNKTNEASKILSNNPSKGLALGIAKAWELYGSANAVVLLIAQEKERNIFDQRAIENELLDRKIHVIRRRFEDVSERGSLDQNRRLFMEDQEVAVVYFRDGYMPSQYNAQNWEARLLLERSCAAKCPDIATQLAGTKKVQQELSRVGLLEALLPGQPEAVARLRATFAGLYSLDMGEEGDQAVAEALAAPSHFVLKPQREGGGNNFYGEEMVHALEQLKDSEERASYILMEKIEPEPFRNCLLRPGSPAQVVQCISELGIFGVYVRQGTTLVMNKHVGHLLRTKAIEHADGGVAAGVAVLDNPYPV.

An N-acetylalanine modification is found at Ala2. Position 125 (Arg125) interacts with substrate. ATP is bound at residue Glu144. Glu144 and Asn146 together coordinate Mg(2+). Residues 148-151, 214-216, Gln220, and 267-270 each bind substrate; these read ISAS, ERN, and RDGY. ATP-binding positions include Lys305, 364 to 373, Tyr375, and 398 to 401; these read KPQREGGGNN and MEKI. Glu368 lines the Mg(2+) pocket. Ser415 carries the phosphoserine modification. An ATP-binding site is contributed by Glu425. Substrate is bound at residue Arg450. 2 residues coordinate ATP: Lys452 and Asp458. A substrate-binding site is contributed by 461–462; the sequence is VA.

It belongs to the eukaryotic GSH synthase family. Homodimer. Mg(2+) is required as a cofactor.

The catalysed reaction is gamma-L-glutamyl-L-cysteine + glycine + ATP = glutathione + ADP + phosphate + H(+). It catalyses the reaction gamma-L-glutamyl-(2S)-2-aminobutanoate + glycine + ATP = ophthalmate + ADP + phosphate + H(+). It participates in sulfur metabolism; glutathione biosynthesis; glutathione from L-cysteine and L-glutamate: step 2/2. Catalyzes the production of glutathione from gamma-glutamylcysteine and glycine in an ATP-dependent manner. Glutathione (gamma-glutamylcysteinylglycine, GSH) is the most abundant intracellular thiol in living aerobic cells and is required for numerous processes including the protection of cells against oxidative damage, amino acid transport, the detoxification of foreign compounds, the maintenance of protein sulfhydryl groups in a reduced state and acts as a cofactor for a number of enzymes. Participates in ophthalmate biosynthesis in hepatocytes. This Rattus norvegicus (Rat) protein is Glutathione synthetase.